We begin with the raw amino-acid sequence, 353 residues long: uncharacterized protein (353 aa).

The chain crosses the membrane as a helical span at residues 267-287 (GLPLVVIEAMAFGLPIVAFNC).

This sequence belongs to the glycosyltransferase group 1 family. Glycosyltransferase 4 subfamily.

It localises to the membrane. This is an uncharacterized protein from Haemophilus influenzae (strain ATCC 51907 / DSM 11121 / KW20 / Rd).